We begin with the raw amino-acid sequence, 146 residues long: Ribosome-binding factor A (146 aa).

Over residues 122–134 the composition is skewed to polar residues; the sequence is QQQFGSAEDVTSN. Positions 122 to 146 are disordered; sequence QQQFGSAEDVTSNDIDEADDTEGKA. The segment covering 135 to 146 has biased composition (acidic residues); the sequence is DIDEADDTEGKA.

This sequence belongs to the RbfA family. Monomer. Binds 30S ribosomal subunits, but not 50S ribosomal subunits or 70S ribosomes.

The protein localises to the cytoplasm. In terms of biological role, one of several proteins that assist in the late maturation steps of the functional core of the 30S ribosomal subunit. Associates with free 30S ribosomal subunits (but not with 30S subunits that are part of 70S ribosomes or polysomes). Required for efficient processing of 16S rRNA. May interact with the 5'-terminal helix region of 16S rRNA. The sequence is that of Ribosome-binding factor A from Shewanella sp. (strain ANA-3).